The sequence spans 237 residues: MTYSRALIKLSGEALMGDKPYGIDPEIVQSIAKDVSKVVENGTQIAIVVGGGNIFRGLKGSAAGMDRATADYVGMLATVMNAITLQDGLERAGVPTRVQSAIDMQQIAEPYIRRRAIRHLEKGRVVVFGGGCGNPFFTTDTTAALRAAEINAEVVFKATKVDGVYDRDPKKFTDAVKYDNLTFQDVLANEIGVMDSTAIALCKDNKIPIVVFNIFQPGNIAKAISGEPIGSRISNSS.

9-12 (KLSG) lines the ATP pocket. Gly-51 serves as a coordination point for UMP. 2 residues coordinate ATP: Gly-52 and Arg-56. UMP-binding positions include Asp-71 and 132–139 (CGNPFFTT). Residues Thr-159, Tyr-165, and Asp-168 each contribute to the ATP site.

The protein belongs to the UMP kinase family. In terms of assembly, homohexamer.

The protein resides in the cytoplasm. It carries out the reaction UMP + ATP = UDP + ADP. The protein operates within pyrimidine metabolism; CTP biosynthesis via de novo pathway; UDP from UMP (UMPK route): step 1/1. Its activity is regulated as follows. Inhibited by UTP. Its function is as follows. Catalyzes the reversible phosphorylation of UMP to UDP. The polypeptide is Uridylate kinase (Prochlorococcus marinus (strain NATL1A)).